A 418-amino-acid polypeptide reads, in one-letter code: Cyclin-dependent kinase 15 (418 aa).

The region spanning 84–369 (YLNLEKLGEG…AQDALLHPYF (286 aa)) is the Protein kinase domain. ATP contacts are provided by residues 90–98 (LGEGTYATV) and lysine 113. The active-site Proton acceptor is the aspartate 205.

It belongs to the protein kinase superfamily. CMGC Ser/Thr protein kinase family. CDC2/CDKX subfamily. Mg(2+) serves as cofactor.

It carries out the reaction L-seryl-[protein] + ATP = O-phospho-L-seryl-[protein] + ADP + H(+). The catalysed reaction is L-threonyl-[protein] + ATP = O-phospho-L-threonyl-[protein] + ADP + H(+). In terms of biological role, serine/threonine-protein kinase involved in the control of the eukaryotic cell cycle, whose activity is controlled by an associated cyclin. This chain is Cyclin-dependent kinase 15 (cdk15), found in Danio rerio (Zebrafish).